Reading from the N-terminus, the 441-residue chain is Xaa-Pro dipeptidase (441 aa).

5 residues coordinate Mn(2+): Asp-244, Asp-255, His-336, Glu-381, and Glu-420.

It belongs to the peptidase M24B family. Bacterial-type prolidase subfamily. It depends on Mn(2+) as a cofactor.

It carries out the reaction Xaa-L-Pro dipeptide + H2O = an L-alpha-amino acid + L-proline. Splits dipeptides with a prolyl residue in the C-terminal position. This chain is Xaa-Pro dipeptidase, found in Xanthomonas campestris pv. campestris (strain B100).